We begin with the raw amino-acid sequence, 240 residues long: UDP-2,3-diacylglucosamine hydrolase (240 aa).

Positions 9, 11, 43, 81, and 116 each coordinate Mn(2+). 81 to 82 (NR) provides a ligand contact to substrate. The substrate site is built by Asp124, Ser162, Lys166, Lys169, and His197. Mn(2+)-binding residues include His197 and His199.

This sequence belongs to the LpxH family. Requires Mn(2+) as cofactor.

The protein localises to the cell inner membrane. The catalysed reaction is UDP-2-N,3-O-bis[(3R)-3-hydroxytetradecanoyl]-alpha-D-glucosamine + H2O = 2-N,3-O-bis[(3R)-3-hydroxytetradecanoyl]-alpha-D-glucosaminyl 1-phosphate + UMP + 2 H(+). Its pathway is glycolipid biosynthesis; lipid IV(A) biosynthesis; lipid IV(A) from (3R)-3-hydroxytetradecanoyl-[acyl-carrier-protein] and UDP-N-acetyl-alpha-D-glucosamine: step 4/6. In terms of biological role, hydrolyzes the pyrophosphate bond of UDP-2,3-diacylglucosamine to yield 2,3-diacylglucosamine 1-phosphate (lipid X) and UMP by catalyzing the attack of water at the alpha-P atom. Involved in the biosynthesis of lipid A, a phosphorylated glycolipid that anchors the lipopolysaccharide to the outer membrane of the cell. The sequence is that of UDP-2,3-diacylglucosamine hydrolase from Neisseria gonorrhoeae (strain ATCC 700825 / FA 1090).